The sequence spans 144 residues: Large ribosomal subunit protein uL15 (144 aa).

The interval 1–52 is disordered; it reads MRLNSLSPAEGAKHSAKRLGRGISSGLGKTGGRGHKGQKSRTGGGVRRGFEG.

This sequence belongs to the universal ribosomal protein uL15 family. In terms of assembly, part of the 50S ribosomal subunit.

In terms of biological role, binds to the 23S rRNA. The sequence is that of Large ribosomal subunit protein uL15 from Actinobacillus pleuropneumoniae serotype 7 (strain AP76).